A 519-amino-acid chain; its full sequence is MAKAATPKRAPARAAAIPAAATPAAKPAKRASTRSAAARSPIAAATASGKIGSVRQVIGAVVDVQFQENLPAILNALETDNQGNRLVLEVAQHLGENTVRCIAMDSTDGLVRGQEVRDTGAPISVPVGPEMLGRIINVIGEPVDEAGPITATEFRGIHQPAPEYVEQSTEAQILVTGIKVLDLLAPYARGGKIGLFGGAGVGKTVLIQELINNVAKAHGGYSVFAGVGERTREGNDLYHEFIESGVNKKGGGEGSKAALVYGQMNEPPGARARVGLTGLTVAEYFRDQGQDVLFFVDNIFRFTQAGSEVSALLGRIPSAVGYQPTLATDMGALQERITTTTKGSITSVQAIYVPADDLTDPAPATSFAHLDATTVLSRAISEKGIYPAVDPLDSTSRMLDPQIVGEEHYQVARAVQQTLQRYKSLQDIIAILGMDELSEEDKLTVARARKIERFLSQPFFVAEVFTGSPGKLVDLQDTIKGFKGLVEGEYDHLPEAAFYMVGTIEDAIEKAERLAAEAA.

A compositionally biased stretch (low complexity) spans 1-26; it reads MAKAATPKRAPARAAAIPAAATPAAK. Residues 1 to 40 are disordered; the sequence is MAKAATPKRAPARAAAIPAAATPAAKPAKRASTRSAAARS. 197–204 is an ATP binding site; it reads GGAGVGKT.

This sequence belongs to the ATPase alpha/beta chains family. F-type ATPases have 2 components, CF(1) - the catalytic core - and CF(0) - the membrane proton channel. CF(1) has five subunits: alpha(3), beta(3), gamma(1), delta(1), epsilon(1). CF(0) has three main subunits: a(1), b(2) and c(9-12). The alpha and beta chains form an alternating ring which encloses part of the gamma chain. CF(1) is attached to CF(0) by a central stalk formed by the gamma and epsilon chains, while a peripheral stalk is formed by the delta and b chains.

It localises to the cell inner membrane. The enzyme catalyses ATP + H2O + 4 H(+)(in) = ADP + phosphate + 5 H(+)(out). Produces ATP from ADP in the presence of a proton gradient across the membrane. The catalytic sites are hosted primarily by the beta subunits. This chain is ATP synthase subunit beta, found in Chelativorans sp. (strain BNC1).